Consider the following 1045-residue polypeptide: Protein madd-4 (1045 aa).

The first 23 residues, 1 to 23, serve as a signal peptide directing secretion; that stretch reads MKCSYTVVFLLFYLLIASFHVDA. TSP type-1 domains lie at 24–71, 236–292, 294–510, 512–572, and 576–635; these read LSWA…KTCE, RCRW…NCVS, SCGR…HPCP, FWLT…NVVA, and TWVT…GSCS. Intrachain disulfides connect Cys-35–Cys-65, Cys-39–Cys-70, and Cys-50–Cys-55. Residues Asn-268 and Asn-280 are each glycosylated (N-linked (GlcNAc...) asparagine). The Ig-like C2-type domain maps to 637-732; sequence PELLSNRVFE…FTDRLQGNVT (96 aa). Cys-674 and Cys-722 are joined by a disulfide. Residues Asn-730 and Asn-781 are each glycosylated (N-linked (GlcNAc...) asparagine). Residues 811–873 form the TSP type-1 6 domain; the sequence is RWDIGHWSEC…TRPCHREDCP (63 aa). 2 N-linked (GlcNAc...) asparagine glycosylation sites follow: Asn-899 and Asn-906. The 59-residue stretch at 932 to 990 folds into the TSP type-1 7 domain; it reads CKAEWRTSDWGSCSSECGTGGVQLRLLSCVWISSGRPAGRNCEQMRRPHSARACVADEP. Residues 1004–1041 enclose the PLAC domain; it reads RDASCQDQSRFCDIIKLFHSCDSLEVRQKCCSTCTFVE.

In terms of assembly, interacts with eva-1 (via the SUEL-type lectin domain). Interacts with unc-5. Interacts with unc-40; the interaction is required for the localization of unc-40 to postsynaptic domains. Isoform a forms homodimers and heterodimers with isoform b. Isoform b forms homodimers and heterodimers with isoform a. Isoform b interacts with nlg-1 (via extracellular domain); the interaction is required for nlg-1 localization to postsynaptic domains. Isoform b interacts (via the Ig-like C2-type domain) with nrx-1 (via C-terminus). Isoform a: Expressed in the commissural GABAergic and cholinergic motor neurons in the first larval stage but only in the cholinergic motor neurons in later larval stages and in adult animals. At the L1 larval stage, mainly localized at the nerve ring and at the dorsal cord. Isoform b: Expressed in the commissural GABAergic and cholinergic motor neurons whose cell bodies reside in the ventral nerve cord and which extend axons into the ventral and dorsal nerve cord. Also expressed in the head neurons RIA, RIC, lateral IL1s, lateral IL2s, OLLs, RMEs and SABs, all of which extend axons into the nerve ring. Expressed in the embryogenic blast cells and the corresponding terminally differentiated ventral cord motor neurons and head neurons.

It localises to the cell projection. The protein resides in the axon. It is found in the secreted. The protein localises to the synapse. Its subcellular location is the extracellular space. It localises to the extracellular matrix. Functionally, component of an extracellular matrix cue that is involved in the guidance of dorsoventral midline migrations and in the specification of postsynaptic domains at neuromuscular junctions (NMJs). Acts as a ligand for the netrin receptor unc-40 and the neuroligin receptor nlg-1. Secreted by the dorsal and ventral nerve cords to attract sensory axons and muscle membrane extensions called muscle arms. In parallel with unc-6 and slt-1, involved in the netrin receptor unc-40 dependent guidance of the AVM and PVM mechanosensory axons along the dorsal-ventral axis. The unc-40 coreceptor eva-1 is enhancing the responsiveness of unc-40 to the madd-4 guidance cue to attract the muscle arm extensions and AVM mechanosensory axons towards the dorsoventral midline. Acts as a synaptic organizer and is required for the specification of inhibitory GABAergic and excitatory cholinergic identities of postsynaptic domains at neuromuscular junctions (NMJs). Required for the recruitment of unc-40 to both cholinergic and GABAergic NMJs. Promotes the clustering of ACh receptors and GABA(A) receptors at postsynaptic sites during synaptogenesis. The binding to the presynaptic adhesion protein nrx-1 and to the neuroligin nlg-1 at postsynaptic sites promotes clustering of GABAergic receptors at postsynaptic NMJs, thereby contributing to normal GABAergic synaptic transmission. Isoform a and isoform c: Promotes the clustering of acetylcholine receptors (AChR) at excitatory cholinergic synapses of NMJs via the netrin receptor unc-40. Its function is as follows. Acts as a guidance cue in the attraction of muscle membrane extensions (muscle arms) to the dorsal cord and in cooperation with unc-6 to the ventral cord via the netrin receptor unc-40 and via the unc-40 coreceptor eva-1. Together with nrx-1, clusters netrin receptor unc-40 and neuroligin nlg-1 at postsynaptic sites of GABAergic NMJs, thereby promoting the recruitment of GABA(A) receptors at GABAergic synapses. Prevents the recruitment of GABAergic receptors to cholinergic synapses. The sequence is that of Protein madd-4 from Caenorhabditis elegans.